Consider the following 487-residue polypeptide: L-tartrate/succinate antiporter (487 aa).

A run of 14 helical transmembrane segments spans residues 10 to 30 (YLAP…AGLE), 33 to 53 (TWLY…EPVP), 54 to 74 (GAVV…WLLF), 93 to 113 (WAVS…FMFG), 137 to 157 (TLFL…VTPS), 189 to 209 (IGSY…AIFL), 230 to 250 (LSWG…VLLV), 292 to 312 (LMVG…AAMV), 313 to 333 (GYSV…DIVS), 340 to 360 (VFFW…TGFI), 370 to 390 (SLSG…FYLL), 393 to 413 (FFAS…AAAL), 418 to 438 (IPLP…SILT), and 465 to 485 (IFGL…MPVV).

It belongs to the SLC13A/DASS transporter (TC 2.A.47) family. DIT1 subfamily.

Its subcellular location is the cell inner membrane. It carries out the reaction (2R,3R)-tartrate(out) + succinate(in) = (2R,3R)-tartrate(in) + succinate(out). Its function is as follows. Catalyzes the uptake of tartrate in exchange for intracellular succinate. Essential for anaerobic L-tartrate fermentation. The protein is L-tartrate/succinate antiporter (ttdT) of Shigella dysenteriae serotype 1 (strain Sd197).